The sequence spans 446 residues: Sulfoquinovose isomerase (446 aa).

This sequence belongs to the SqvD family.

It carries out the reaction 6-sulfo-beta-D-quinovose = 6-deoxy-6-sulfo-D-fructose. Part of the sulfo-TAL (or sulfo-SFT) pathway, a D-sulfoquinovose degradation pathway that produces sulfolactate (SL). Catalyzes the isomerization of sulfoquinovose (SQ) to 6-deoxy-6-sulfo-D-fructose (SF). This chain is Sulfoquinovose isomerase, found in Priestia aryabhattai (Bacillus aryabhattai).